A 250-amino-acid chain; its full sequence is Coproheme decarboxylase (250 aa).

Fe-coproporphyrin III contacts are provided by residues R131, 145–149, H172, and Q185; that span reads YPMNK. The active site involves Y145.

The protein belongs to the ChdC family. Type 1 subfamily. Fe-coproporphyrin III serves as cofactor.

It carries out the reaction Fe-coproporphyrin III + 2 H2O2 + 2 H(+) = heme b + 2 CO2 + 4 H2O. The catalysed reaction is Fe-coproporphyrin III + H2O2 + H(+) = harderoheme III + CO2 + 2 H2O. It catalyses the reaction harderoheme III + H2O2 + H(+) = heme b + CO2 + 2 H2O. It participates in porphyrin-containing compound metabolism; protoheme biosynthesis. In terms of biological role, involved in coproporphyrin-dependent heme b biosynthesis. Catalyzes the decarboxylation of Fe-coproporphyrin III (coproheme) to heme b (protoheme IX), the last step of the pathway. The reaction occurs in a stepwise manner with a three-propionate intermediate. In Staphylococcus aureus (strain MSSA476), this protein is Coproheme decarboxylase.